A 139-amino-acid chain; its full sequence is Small ribosomal subunit protein uS9 (139 aa).

Belongs to the universal ribosomal protein uS9 family.

The protein is Small ribosomal subunit protein uS9 of Coxiella burnetii (strain CbuG_Q212) (Coxiella burnetii (strain Q212)).